The following is a 1135-amino-acid chain: Eukaryotic translation initiation factor 3 subunit A (1135 aa).

A PCI domain is found at 319–501 (LQRMAAHVLL…NSIYFGTDLT (183 aa)). Basic and acidic residues-rich tracts occupy residues 588–623 (QNNAREEEEARRQEEESRKAKLAEQKRLEQEQEERE) and 829–899 (AAEE…RGGD). Disordered regions lie at residues 588 to 631 (QNNA…QNEI) and 829 to 1135 (AAEE…VKRR). The residue at position 908 (Ser908) is a Phosphoserine. 4 stretches are compositionally biased toward basic and acidic residues: residues 920–971 (ERNE…EPDS), 985–1045 (SRDD…EPQR), 1053–1081 (DAPRNADRENRRPAGERRDRDVRETRGDQ), and 1104–1125 (AREEKPASKRDQPQEKENKAAD).

This sequence belongs to the eIF-3 subunit A family. Component of the eukaryotic translation initiation factor 3 (eIF-3) complex. The eIF-3 complex interacts with pix.

The protein localises to the cytoplasm. RNA-binding component of the eukaryotic translation initiation factor 3 (eIF-3) complex, which is involved in protein synthesis of a specialized repertoire of mRNAs and, together with other initiation factors, stimulates binding of mRNA and methionyl-tRNAi to the 40S ribosome. The eIF-3 complex specifically targets and initiates translation of a subset of mRNAs involved in cell proliferation. The protein is Eukaryotic translation initiation factor 3 subunit A of Drosophila erecta (Fruit fly).